A 1197-amino-acid chain; its full sequence is SRC kinase signaling inhibitor 1 (1197 aa).

Residues alanine 19–arginine 45 are compositionally biased toward basic and acidic residues. The disordered stretch occupies residues alanine 19–asparagine 80. Residues serine 47 and serine 52 each carry the phosphoserine modification. Positions leucine 65–glycine 75 are enriched in gly residues. Serine 79 is subject to Phosphoserine. Residue threonine 86 is modified to Phosphothreonine. 7 positions are modified to phosphoserine: serine 87, serine 98, serine 178, serine 200, serine 204, serine 214, and serine 260. At tyrosine 276 the chain carries Phosphotyrosine. Residues alanine 319–leucine 415 are disordered. Residues arginine 321–asparagine 331 show a composition bias toward polar residues. The span at leucine 332 to serine 341 shows a compositional bias: low complexity. A phosphoserine mark is found at serine 333, serine 342, and serine 359. Residues proline 348–serine 366 are compositionally biased toward low complexity. Omega-N-methylarginine is present on residues arginine 364 and arginine 371. Phosphoserine is present on residues serine 378, serine 397, and serine 399. Positions proline 391–proline 400 are enriched in polar residues. Basic and acidic residues predominate over residues leucine 404–leucine 415. Tyrosine 431 carries the phosphotyrosine modification. The disordered stretch occupies residues glycine 501 to proline 676. Pro residues predominate over residues glycine 520–glycine 531. Residues serine 527, serine 530, and serine 534 each carry the phosphoserine modification. Omega-N-methylarginine is present on arginine 535. Serine 537, serine 547, serine 549, serine 551, and serine 556 each carry phosphoserine. Residues lysine 595–glutamate 607 show a composition bias toward basic and acidic residues. Serine 631 and serine 655 each carry phosphoserine. 2 positions are modified to phosphothreonine: threonine 658 and threonine 671. The interval arginine 681 to valine 731 is interaction with SNAP25. 2 coiled-coil regions span residues leucine 688–leucine 708 and glutamate 760–aspartate 780. A phosphoserine mark is found at serine 878 and serine 900. Disordered regions lie at residues glycine 891–tryptophan 949 and aspartate 983–serine 1065. Residue threonine 918 is modified to Phosphothreonine. Position 1021 is a phosphoserine (serine 1021). The segment covering lysine 1036–arginine 1045 has biased composition (pro residues). Residues serine 1077 and serine 1094 each carry the phosphoserine modification. A disordered region spans residues serine 1141–threonine 1163.

The protein belongs to the SRCIN1 family. As to quaternary structure, interacts with BCAR1/p130Cas through its C-terminal domain and with CSK, CTTN and SRC. Also interacts with MAPRE3/EB3, SORBS3/vinexin and the N-terminal coiled-coil region of SNAP25. In terms of processing, tyrosine-phosphorylated in response to EGF and to cell adhesion to integrin ligands. As to expression, expressed exclusively in brain. Abundant in telencephalon and expressed moderately in cerebellum, hypothalamus, thalamus, superior and inferior colliculi, and olfactory bulb. No expression detected in medulla oblongata, spinal cord or pituitary gland. Enriched in the neuropil rather than soma in the thalamus, corpus striatum and cerebral cortex. Detected in astrocytes.

It localises to the cytoplasm. The protein localises to the cytoskeleton. The protein resides in the cell projection. It is found in the axon. Its subcellular location is the dendrite. It localises to the presynapse. The protein localises to the postsynapse. The protein resides in the postsynaptic density. In terms of biological role, acts as a negative regulator of SRC by activating CSK which inhibits SRC activity and downstream signaling, leading to impaired cell spreading and migration. Regulates dendritic spine morphology. Involved in calcium-dependent exocytosis. May play a role in neurotransmitter release or synapse maintenance. The sequence is that of SRC kinase signaling inhibitor 1 from Rattus norvegicus (Rat).